Here is an 852-residue protein sequence, read N- to C-terminus: Taste receptor type 1 member 3 (852 aa).

The first 20 residues, 1–20, serve as a signal peptide directing secretion; the sequence is MLGPAVLGLSLWALLHPGTG. At 21–570 the chain is on the extracellular side; that stretch reads APLCLSQQLR…FLAWGEPAVL (550 aa). 8 N-linked (GlcNAc...) asparagine glycosylation sites follow: N85, N130, N264, N285, N380, N411, N432, and N475. Residues 536–545 are required for brazzein responsiveness; it reads IACTFCGQDE. The helical transmembrane segment at 571 to 591 threads the bilayer; sequence LLLLLLSLALGLVLAALGLFV. Over 592–603 the chain is Cytoplasmic; the sequence is HHRDSPLVQASG. The helical transmembrane segment at 604–624 threads the bilayer; it reads GPLACFGLVCLGLVCLSVLLF. Topologically, residues 625 to 639 are extracellular; it reads PGQPSPARCLAQQPL. Residues 640–660 form a helical membrane-spanning segment; the sequence is SHLPLTGCLSTLFLQAAEIFV. At 661–682 the chain is on the cytoplasmic side; that stretch reads ESELPLSWADRLSGCLRGPWAW. A helical membrane pass occupies residues 683 to 703; that stretch reads LVVLLAMLVEVALCTWYLVAF. Residues 704-729 lie on the Extracellular side of the membrane; sequence PPEVVTDWHMLPTEALVHCRTRSWVS. The chain crosses the membrane as a helical span at residues 730–750; it reads FGLAHATNATLAFLCFLGTFL. Residues 751-762 lie on the Cytoplasmic side of the membrane; it reads VRSQPGCYNRAR. A helical membrane pass occupies residues 763–783; the sequence is GLTFAMLAYFITWVSFVPLLA. Over 784–789 the chain is Extracellular; it reads NVQVVL. Residues 790 to 810 form a helical membrane-spanning segment; sequence RPAVQMGALLLCVLGILAAFH. Residues 811–852 lie on the Cytoplasmic side of the membrane; the sequence is LPRCYLLMRQPGLNTPEFFLGGGPGDAQGQNDGNTGNQGKHE.

It belongs to the G-protein coupled receptor 3 family. TAS1R subfamily. Forms homodimers or heterodimers with TAS1R1 and TAS1R2.

Its subcellular location is the cell membrane. In terms of biological role, putative taste receptor. TAS1R1/TAS1R3 responds to the umami taste stimulus (the taste of monosodium glutamate). TAS1R2/TAS1R3 recognizes diverse natural and synthetic sweeteners. TAS1R3 is essential for the recognition and response to the disaccharide trehalose. Sequence differences within and between species can significantly influence the selectivity and specificity of taste responses. This Homo sapiens (Human) protein is Taste receptor type 1 member 3 (TAS1R3).